A 288-amino-acid chain; its full sequence is Polyketide biosynthesis malonyl CoA-acyl carrier protein transacylase PksC (288 aa).

Active-site residues include serine 87 and histidine 193.

Belongs to the FabD family.

It localises to the cytoplasm. It carries out the reaction holo-[ACP] + malonyl-CoA = malonyl-[ACP] + CoA. The protein operates within antibiotic biosynthesis; bacillaene biosynthesis. Involved in some intermediate steps for the synthesis of the antibiotic polyketide bacillaene which is involved in secondary metabolism. It catalyzes the transfer of the malonyl-CoA group to the acyl-carrier-protein AcpK (Mal-AcpK). The sequence is that of Polyketide biosynthesis malonyl CoA-acyl carrier protein transacylase PksC (pksC) from Bacillus subtilis (strain 168).